The sequence spans 320 residues: Aspartate carbamoyltransferase catalytic subunit (320 aa).

The carbamoyl phosphate site is built by Arg-68 and Thr-69. Residue Lys-96 participates in L-aspartate binding. Residues Arg-118, His-148, and Gln-151 each contribute to the carbamoyl phosphate site. L-aspartate contacts are provided by Arg-181 and Arg-236. Gly-277 and Pro-278 together coordinate carbamoyl phosphate.

Belongs to the aspartate/ornithine carbamoyltransferase superfamily. ATCase family. In terms of assembly, heterododecamer (2C3:3R2) of six catalytic PyrB chains organized as two trimers (C3), and six regulatory PyrI chains organized as three dimers (R2).

The catalysed reaction is carbamoyl phosphate + L-aspartate = N-carbamoyl-L-aspartate + phosphate + H(+). The protein operates within pyrimidine metabolism; UMP biosynthesis via de novo pathway; (S)-dihydroorotate from bicarbonate: step 2/3. Its function is as follows. Catalyzes the condensation of carbamoyl phosphate and aspartate to form carbamoyl aspartate and inorganic phosphate, the committed step in the de novo pyrimidine nucleotide biosynthesis pathway. In Leptothrix cholodnii (strain ATCC 51168 / LMG 8142 / SP-6) (Leptothrix discophora (strain SP-6)), this protein is Aspartate carbamoyltransferase catalytic subunit.